Here is a 129-residue protein sequence, read N- to C-terminus: MFKAFKEFAFRGNVIDLAVGVILGAAFSGIIKSLVDSIFMPLIGIIIGGIDVKGLSVEVGNANLLYGQFLQASIEFILIAFALFLFVKGINAFRRKEETTEEVAAPTTEEKLLTEIRDALVRQQNERMK.

The next 3 membrane-spanning stretches (helical) occupy residues 8 to 28 (FAFRGNVIDLAVGVILGAAFS), 30 to 50 (IIKSLVDSIFMPLIGIIIGGI), and 67 to 87 (GQFLQASIEFILIAFALFLFV).

Belongs to the MscL family. Homopentamer.

The protein localises to the cell membrane. Functionally, channel that opens in response to stretch forces in the membrane lipid bilayer. May participate in the regulation of osmotic pressure changes within the cell. This Exiguobacterium sibiricum (strain DSM 17290 / CCUG 55495 / CIP 109462 / JCM 13490 / 255-15) protein is Large-conductance mechanosensitive channel.